Reading from the N-terminus, the 449-residue chain is MGRMFGTDGVRGIANKELTADLAYKLGKAGAFILTEGTHRSKILVGMDTRISGDMLESALVAGILSVGAEAICVGVIPTPAIAYLTRKYNADAGVVISASHNPVEYNGIKFFNKNGYKLSDELEDSIQALIRDDFKDVPVLTGENIGRKIEEDGEAIRDYIDFAKSTIKGDLKGLKVALDCANGASYITSVEAFKELGAEVHVINNKPDGININRNSGSTHPEDLMEYVVKNNCHMGLAFDGDADRCLAIDEKGNLINGDFILAICGKELKKQGRLKKNTIVVTVMSNLGLDIAMKKEEINTIKTKVGDRYVLEEMLKNDYAIGGEQSGHIIFSDYNTTGDGLVTALQLAHIVKESGKTFSELCSIMKELPQVLVNAKVPNDQKDIYLKDEEIKSEIDTITKNLDGSGRVLIRPSGTEPLVRVMLEGENQKEIDKLAHGLAKLIENKVK.

S100 (phosphoserine intermediate) is an active-site residue. The Mg(2+) site is built by S100, D241, D243, and D245. The residue at position 100 (S100) is a Phosphoserine.

It belongs to the phosphohexose mutase family. Requires Mg(2+) as cofactor. Activated by phosphorylation.

It catalyses the reaction alpha-D-glucosamine 1-phosphate = D-glucosamine 6-phosphate. In terms of biological role, catalyzes the conversion of glucosamine-6-phosphate to glucosamine-1-phosphate. In Clostridium botulinum (strain ATCC 19397 / Type A), this protein is Phosphoglucosamine mutase.